A 492-amino-acid polypeptide reads, in one-letter code: N-succinylglutamate 5-semialdehyde dehydrogenase (492 aa).

220–225 (GSASTG) contacts NAD(+). Active-site residues include Glu-243 and Cys-277.

It belongs to the aldehyde dehydrogenase family. AstD subfamily.

It carries out the reaction N-succinyl-L-glutamate 5-semialdehyde + NAD(+) + H2O = N-succinyl-L-glutamate + NADH + 2 H(+). It participates in amino-acid degradation; L-arginine degradation via AST pathway; L-glutamate and succinate from L-arginine: step 4/5. Functionally, catalyzes the NAD-dependent reduction of succinylglutamate semialdehyde into succinylglutamate. In Salmonella enteritidis PT4 (strain P125109), this protein is N-succinylglutamate 5-semialdehyde dehydrogenase.